We begin with the raw amino-acid sequence, 311 residues long: Dehydrogenase/reductase SDR family member 7C (311 aa).

The N-terminal stretch at 1–18 is a signal peptide; that stretch reads MGIMAVLMLPLLLLGVSG. Positions 47, 49, 191, 195, and 226 each coordinate NAD(+). Catalysis depends on tyrosine 191, which acts as the Proton acceptor.

Belongs to the short-chain dehydrogenases/reductases (SDR) family. As to expression, expressed in skeletal muscle, cardiac muscle and skin.

It is found in the sarcoplasmic reticulum membrane. The catalysed reaction is all-trans-retinol + NAD(+) = all-trans-retinal + NADH + H(+). Its function is as follows. NADH-dependent oxidoreductase which catalyzes the oxidation of all-trans-retinol to all-trans-retinal. Plays a role in the regulation of cardiac and skeletal muscle metabolic functions. Maintains Ca(2+) intracellular homeostasis by repressing Ca(2+) release from the sarcoplasmic reticulum (SR) in myotubes, possibly through local alternations in NAD/NADH or retinol/retinal. Also plays a role in Ca(2+) homeostasis by controlling Ca(2+) overload in the cytosol and the SR in myotubes. Involved in glucose uptake into skeletal muscles and muscle performance by activating PI3K and mTORC2-mediated AKT1 phosphorylation signaling pathways, possibly through the action of its downstream catalytic product all-trans-retinoic acid. This chain is Dehydrogenase/reductase SDR family member 7C, found in Rattus norvegicus (Rat).